The primary structure comprises 529 residues: Phospholipase A1-Igamma2, chloroplastic (529 aa).

The N-terminal 43 residues, 1–43, are a transit peptide targeting the chloroplast; that stretch reads MAAIPSHNNLLTINHKNSITGSSSLNTNFSEINFPAKFRVATR. A GXSXG motif is present at residues 316–320; sequence GHSLG. Serine 318 functions as the Acyl-ester intermediate in the catalytic mechanism. Residues aspartate 381 and histidine 437 each act as charge relay system in the active site.

The protein belongs to the AB hydrolase superfamily. Lipase family. Interacts with SBP1. In terms of tissue distribution, widely expressed. Highly expressed in leaves and stems.

The protein localises to the plastid. Its subcellular location is the chloroplast. It catalyses the reaction 1,2-dihexadecanoyl-sn-glycero-3-phosphocholine + H2O = 2-hexadecanoyl-sn-glycero-3-phosphocholine + hexadecanoate + H(+). The enzyme catalyses a 1,2-diacyl-3-O-(beta-D-galactosyl)-sn-glycerol + H2O = an acyl-3-O-(beta-D-galactosyl)-sn-glycerol + a fatty acid + H(+). The catalysed reaction is a 1,2-diacyl-3-O-[alpha-D-galactosyl-(1-&gt;6)-beta-D-galactosyl]-sn-glycerol + H2O = acyl-3-O-[alpha-D-galactosyl-(1-&gt;6)-beta-D-galactosyl]-sn-glycerol + a fatty acid + H(+). It carries out the reaction a triacylglycerol + H2O = a diacylglycerol + a fatty acid + H(+). Its function is as follows. Acylhydrolase with broad specificity. Catalyzes the hydrolysis of phosphatidylcholine at the sn-1 position. Possesses moderate activity toward phosphatidylcholine (PC), monogalactosyldiacylglycerol (MGDG), digalactosyldiacylglycerol (DGDG) and triacylglycerol (TAG). This chain is Phospholipase A1-Igamma2, chloroplastic, found in Arabidopsis thaliana (Mouse-ear cress).